Reading from the N-terminus, the 489-residue chain is UDP-N-acetylmuramoyl-L-alanyl-D-glutamate--2,6-diaminopimelate ligase (489 aa).

Ser-30 provides a ligand contact to UDP-N-acetyl-alpha-D-muramoyl-L-alanyl-D-glutamate. 108 to 114 (GTNGKTT) lines the ATP pocket. UDP-N-acetyl-alpha-D-muramoyl-L-alanyl-D-glutamate contacts are provided by residues Asn-149, 150 to 151 (TT), Ser-177, Gln-183, and Arg-185. An N6-carboxylysine modification is found at Lys-217. Meso-2,6-diaminopimelate contacts are provided by residues Arg-383, 407–410 (DNPR), Gly-459, and Glu-463. Positions 407–410 (DNPR) match the Meso-diaminopimelate recognition motif motif.

Belongs to the MurCDEF family. MurE subfamily. Mg(2+) serves as cofactor. Carboxylation is probably crucial for Mg(2+) binding and, consequently, for the gamma-phosphate positioning of ATP.

It is found in the cytoplasm. It carries out the reaction UDP-N-acetyl-alpha-D-muramoyl-L-alanyl-D-glutamate + meso-2,6-diaminopimelate + ATP = UDP-N-acetyl-alpha-D-muramoyl-L-alanyl-gamma-D-glutamyl-meso-2,6-diaminopimelate + ADP + phosphate + H(+). It functions in the pathway cell wall biogenesis; peptidoglycan biosynthesis. Functionally, catalyzes the addition of meso-diaminopimelic acid to the nucleotide precursor UDP-N-acetylmuramoyl-L-alanyl-D-glutamate (UMAG) in the biosynthesis of bacterial cell-wall peptidoglycan. In Geobacillus kaustophilus (strain HTA426), this protein is UDP-N-acetylmuramoyl-L-alanyl-D-glutamate--2,6-diaminopimelate ligase.